A 313-amino-acid chain; its full sequence is Ribosomal RNA small subunit methyltransferase H (313 aa).

S-adenosyl-L-methionine contacts are provided by residues glycine 35 to histidine 37, aspartate 55, phenylalanine 79, aspartate 101, and glutamine 108.

It belongs to the methyltransferase superfamily. RsmH family.

It is found in the cytoplasm. The enzyme catalyses cytidine(1402) in 16S rRNA + S-adenosyl-L-methionine = N(4)-methylcytidine(1402) in 16S rRNA + S-adenosyl-L-homocysteine + H(+). Its function is as follows. Specifically methylates the N4 position of cytidine in position 1402 (C1402) of 16S rRNA. This is Ribosomal RNA small subunit methyltransferase H from Escherichia coli O6:H1 (strain CFT073 / ATCC 700928 / UPEC).